Reading from the N-terminus, the 104-residue chain is L-rhamnose mutarotase (104 aa).

Y18 contributes to the substrate binding site. The Proton donor role is filled by H22. Substrate is bound by residues Y41 and 76 to 77 (WW).

Belongs to the rhamnose mutarotase family. Homodimer.

It localises to the cytoplasm. The catalysed reaction is alpha-L-rhamnose = beta-L-rhamnose. It functions in the pathway carbohydrate metabolism; L-rhamnose metabolism. In terms of biological role, involved in the anomeric conversion of L-rhamnose. The chain is L-rhamnose mutarotase from Escherichia coli O8 (strain IAI1).